The sequence spans 192 residues: MKFLLRASSLAGQSLRFASQRPKVFFDVSIGEEPAGRVTMELFNDVVPKTAENFRALCTGEKGVGEQGVALHFKGSKFHRIIPEFMIQGGDFTRHNGTGGESIYGNKFKDENFDLKHTGPGCLSMANAGPNTNGSQFFICTVDTPWLDGGHVVFGQVTDGMSVVKKIEKMGSRSGAPAKTVTIADCGELKSE.

A PPIase cyclophilin-type domain is found at 25–188 (FFDVSIGEEP…KTVTIADCGE (164 aa)).

This sequence belongs to the cyclophilin-type PPIase family.

The catalysed reaction is [protein]-peptidylproline (omega=180) = [protein]-peptidylproline (omega=0). Functionally, PPIases accelerate the folding of proteins. It catalyzes the cis-trans isomerization of proline imidic peptide bonds in oligopeptides. The sequence is that of Peptidyl-prolyl cis-trans isomerase 1 (cyn-1) from Caenorhabditis elegans.